The following is a 283-amino-acid chain: Protein-L-isoaspartate O-methyltransferase (283 aa).

Ser122 is a catalytic residue.

This sequence belongs to the methyltransferase superfamily. L-isoaspartyl/D-aspartyl protein methyltransferase family.

It localises to the cytoplasm. It carries out the reaction [protein]-L-isoaspartate + S-adenosyl-L-methionine = [protein]-L-isoaspartate alpha-methyl ester + S-adenosyl-L-homocysteine. Catalyzes the methyl esterification of L-isoaspartyl residues in peptides and proteins that result from spontaneous decomposition of normal L-aspartyl and L-asparaginyl residues. It plays a role in the repair and/or degradation of damaged proteins. This chain is Protein-L-isoaspartate O-methyltransferase, found in Leptothrix cholodnii (strain ATCC 51168 / LMG 8142 / SP-6) (Leptothrix discophora (strain SP-6)).